A 181-amino-acid chain; its full sequence is Probable pyruvoyl-dependent arginine decarboxylase (181 aa).

Position 43 is a pyruvic acid (Ser) (Ser43).

This sequence belongs to the PdaD family. Requires pyruvate as cofactor.

The enzyme catalyses L-arginine + H(+) = agmatine + CO2. The polypeptide is Probable pyruvoyl-dependent arginine decarboxylase (Chlorobium limicola (strain DSM 245 / NBRC 103803 / 6330)).